Here is a 494-residue protein sequence, read N- to C-terminus: UPF0371 protein SPT_0390 (494 aa).

Belongs to the UPF0371 family.

This is UPF0371 protein SPT_0390 from Streptococcus pneumoniae (strain Taiwan19F-14).